Here is a 696-residue protein sequence, read N- to C-terminus: D-(-)-3-hydroxybutyrate oligomer hydrolase (696 aa).

The first 26 residues, 1-26, serve as a signal peptide directing secretion; the sequence is MTKLGWGRRVVWGAALAAVAMLGACN. The active-site Charge relay system is the Ser309.

It belongs to the D-(-)-3-hydroxybutyrate oligomer hydrolase family.

The protein localises to the secreted. It catalyses the reaction (3R)-hydroxybutanoate dimer + H2O = 2 (R)-3-hydroxybutanoate + H(+). Its pathway is lipid metabolism; butanoate metabolism. In terms of biological role, participates in the degradation of poly-3-hydroxybutyrate (PHB). It works downstream of poly(3-hydroxybutyrate) depolymerase, hydrolyzing D(-)-3-hydroxybutyrate oligomers of various length (3HB-oligomers) into 3HB-monomers. In Burkholderia cenocepacia (strain HI2424), this protein is D-(-)-3-hydroxybutyrate oligomer hydrolase.